The primary structure comprises 269 residues: Phosphate import ATP-binding protein PstB 1 (269 aa).

Residues 25-264 (LSTEDLHVFY…PQVDLTNDYI (240 aa)) form the ABC transporter domain. Position 57–64 (57–64 (GPSGSGKS)) interacts with ATP.

The protein belongs to the ABC transporter superfamily. Phosphate importer (TC 3.A.1.7) family. As to quaternary structure, the complex is composed of two ATP-binding proteins (PstB), two transmembrane proteins (PstC and PstA) and a solute-binding protein (PstS).

Its subcellular location is the cell membrane. It carries out the reaction phosphate(out) + ATP + H2O = ADP + 2 phosphate(in) + H(+). Its function is as follows. Part of the ABC transporter complex PstSACB involved in phosphate import. Responsible for energy coupling to the transport system. This chain is Phosphate import ATP-binding protein PstB 1, found in Lactiplantibacillus plantarum (strain ATCC BAA-793 / NCIMB 8826 / WCFS1) (Lactobacillus plantarum).